Consider the following 557-residue polypeptide: Kelch repeat and BTB domain-containing protein 2 (557 aa).

The region spanning C26 to N95 is the BTB domain. One can recognise a BACK domain in the interval I143–K223. Kelch repeat units follow at residues E305–D352, T353–Q399, and S415–D464.

In terms of assembly, interacts (via BTB domain) with host CUL3.

It localises to the host cytoplasm. In terms of biological role, probable substrate-specific adapter of CUL3-containing E3 ubiquitin-protein ligases which mediate the ubiquitination and subsequent proteasomal degradation of host target proteins. The chain is Kelch repeat and BTB domain-containing protein 2 (KBTB2) from Cowpox virus (strain Brighton Red) (CPV).